Here is a 173-residue protein sequence, read N- to C-terminus: Alpha-crystallin A chain (173 aa).

Residue methionine 1 is modified to N-acetylmethionine. The interval 1–63 (MDIAIQHPWF…RTVLDSGVSE (63 aa)) is required for complex formation with BFSP1 and BFSP2. Position 6 is a deamidated glutamine; partial (glutamine 6). Serine 45 bears the Phosphoserine mark. Glutamine 50 bears the Deamidated glutamine; partial mark. One can recognise a sHSP domain in the interval 52-162 (LFRTVLDSGV…GHSERAIPVS (111 aa)). An N6-acetyllysine modification is found at lysine 70. Zn(2+) is bound at residue histidine 79. Glutamine 90 carries the deamidated glutamine; partial modification. Lysine 99 is modified (N6-acetyllysine). Histidine 100 is a Zn(2+) binding site. At asparagine 101 the chain carries Deamidated asparagine; partial. Zn(2+) contacts are provided by glutamate 102 and histidine 107. At serine 122 the chain carries Phosphoserine. Residue asparagine 123 is modified to Deamidated asparagine; partial. The interval 144 to 173 (PKVPSGVDAGHSERAIPVSREEKPSSAPTS) is disordered. A compositionally biased stretch (basic and acidic residues) spans 153-167 (GHSERAIPVSREEKP). Histidine 154 provides a ligand contact to Zn(2+). Serine 162 carries an O-linked (GlcNAc) serine glycan.

This sequence belongs to the small heat shock protein (HSP20) family. Heteromer composed of three CRYAA and one CRYAB subunits. Inter-subunit bridging via zinc ions enhances stability, which is crucial as there is no protein turn over in the lens. Can also form homodimers and homotetramers (dimers of dimers) which serve as the building blocks of homooligomers. Within homooligomers, the zinc-binding motif is created from residues of 3 different molecules. His-100 and Glu-102 from one molecule are ligands of the zinc ion, and His-107 and His-154 residues from additional molecules complete the site with tetrahedral coordination geometry. Part of a complex required for lens intermediate filament formation composed of BFSP1, BFSP2 and CRYAA. Post-translationally, acetylation at Lys-70 may increase chaperone activity. Undergoes age-dependent proteolytical cleavage at the C-terminus.

The protein resides in the cytoplasm. Its subcellular location is the nucleus. In terms of biological role, contributes to the transparency and refractive index of the lens. Acts as a chaperone, preventing aggregation of various proteins under a wide range of stress conditions. Required for the correct formation of lens intermediate filaments as part of a complex composed of BFSP1, BFSP2 and CRYAA. This is Alpha-crystallin A chain (CRYAA) from Sus scrofa (Pig).